The primary structure comprises 202 residues: Imidazoleglycerol-phosphate dehydratase (202 aa).

The protein belongs to the imidazoleglycerol-phosphate dehydratase family.

It is found in the cytoplasm. It carries out the reaction D-erythro-1-(imidazol-4-yl)glycerol 3-phosphate = 3-(imidazol-4-yl)-2-oxopropyl phosphate + H2O. It participates in amino-acid biosynthesis; L-histidine biosynthesis; L-histidine from 5-phospho-alpha-D-ribose 1-diphosphate: step 6/9. This Synechococcus sp. (strain WH7803) protein is Imidazoleglycerol-phosphate dehydratase.